The following is a 225-amino-acid chain: ATP phosphoribosyltransferase (225 aa).

The protein belongs to the ATP phosphoribosyltransferase family. Short subfamily. Heteromultimer composed of HisG and HisZ subunits.

It is found in the cytoplasm. It catalyses the reaction 1-(5-phospho-beta-D-ribosyl)-ATP + diphosphate = 5-phospho-alpha-D-ribose 1-diphosphate + ATP. It functions in the pathway amino-acid biosynthesis; L-histidine biosynthesis; L-histidine from 5-phospho-alpha-D-ribose 1-diphosphate: step 1/9. Its function is as follows. Catalyzes the condensation of ATP and 5-phosphoribose 1-diphosphate to form N'-(5'-phosphoribosyl)-ATP (PR-ATP). Has a crucial role in the pathway because the rate of histidine biosynthesis seems to be controlled primarily by regulation of HisG enzymatic activity. The sequence is that of ATP phosphoribosyltransferase from Herminiimonas arsenicoxydans.